The following is a 231-amino-acid chain: Androgen-dependent TFPI-regulating protein (231 aa).

Over 1-7 the chain is Cytoplasmic; it reads MTRTTTC. Residues 8–28 form a helical membrane-spanning segment; that stretch reads VYHFLVWNWYIFLNYYIPLIG. Over 29 to 45 the chain is Extracellular; sequence KDDEKLKEFHDGGRSKY. The helical transmembrane segment at 46–66 threads the bilayer; the sequence is LTLLNLLLQAIFFGVACLDDV. Topologically, residues 67–85 are cytoplasmic; it reads LKRIIGRKDIKFITSTRDL. Residues 86-106 traverse the membrane as a helical segment; sequence LFSTLVFPISTFIFLVFWTLF. At 107–123 the chain is on the extracellular side; the sequence is YYDRSLIYPKGLDDYFP. A helical membrane pass occupies residues 124–144; it reads AWLNHAMHTYILLFVLVETIL. Residues 145 to 154 lie on the Cytoplasmic side of the membrane; it reads RPHHYPSKKL. The chain crosses the membrane as a helical span at residues 155–172; the sequence is GLALLGACNLAYITRVLW. Topologically, residues 173–190 are extracellular; it reads RYSQTGNWVYPVFASLNP. Residues 191 to 211 traverse the membrane as a helical segment; that stretch reads LGIIIFFLVCYILNASIYLVG. Residues 212 to 231 are Cytoplasmic-facing; it reads EKINHWKWGATVKPLMKKKK.

It belongs to the AIG1 family. In terms of tissue distribution, highly expressed in flank organs and weakly in testis and earlobes.

It is found in the cell membrane. The enzyme catalyses 9-hexadecanoyloxy-octadecanoate + H2O = 9-hydroxy-octadecanoate + hexadecanoate + H(+). It carries out the reaction 12-hexadecanoyloxy-octadecanoate + H2O = 12-hydroxyoctadecanoate + hexadecanoate + H(+). It catalyses the reaction 9-(9Z-hexadecenoyloxy)-octadecanoate + H2O = (9Z)-hexadecenoate + 9-hydroxy-octadecanoate + H(+). The catalysed reaction is 12-(9Z-hexadecenoyloxy)-octadecanoate + H2O = 12-hydroxyoctadecanoate + (9Z)-hexadecenoate + H(+). The enzyme catalyses 13-(9Z-hexadecenoyloxy)-octadecanoate + H2O = 13-hydroxy-octadecanoate + (9Z)-hexadecenoate + H(+). It carries out the reaction 9-octadecanoyloxy-octadecanoate + H2O = 9-hydroxy-octadecanoate + octadecanoate + H(+). It catalyses the reaction 12-octadecanoyloxy-octadecanoate + H2O = 12-hydroxyoctadecanoate + octadecanoate + H(+). The catalysed reaction is 13-octadecanoyloxy-octadecanoate + H2O = 13-hydroxy-octadecanoate + octadecanoate + H(+). The enzyme catalyses 9-(9Z-octadecenoyloxy)-octadecanoate + H2O = 9-hydroxy-octadecanoate + (9Z)-octadecenoate + H(+). It carries out the reaction 12-(9Z-octadecenoyloxy)-octadecanoate + H2O = 12-hydroxyoctadecanoate + (9Z)-octadecenoate + H(+). It catalyses the reaction 13-(9Z-octadecenoyloxy)-octadecanoate + H2O = 13-hydroxy-octadecanoate + (9Z)-octadecenoate + H(+). The catalysed reaction is 5-(9Z-octadecenoyloxy)-octadecanoate + H2O = 5-hydroxy-octadecanoate + (9Z)-octadecenoate + H(+). In terms of biological role, hydrolyzes bioactive fatty-acid esters of hydroxy-fatty acids (FAHFAs), but not other major classes of lipids. Shows a preference for FAHFAs with branching distal from the carboxylate head group of the lipids. Regulates the expression and the cell-associated anticoagulant activity of the inhibitor TFPI in endothelial cells (in vitro). The protein is Androgen-dependent TFPI-regulating protein (ADTRP) of Mesocricetus auratus (Golden hamster).